Here is a 501-residue protein sequence, read N- to C-terminus: ATP synthase subunit alpha (501 aa).

Residue 169 to 176 coordinates ATP; it reads GDRQTGKT.

It belongs to the ATPase alpha/beta chains family. F-type ATPases have 2 components, CF(1) - the catalytic core - and CF(0) - the membrane proton channel. CF(1) has five subunits: alpha(3), beta(3), gamma(1), delta(1), epsilon(1). CF(0) has three main subunits: a(1), b(2) and c(9-12). The alpha and beta chains form an alternating ring which encloses part of the gamma chain. CF(1) is attached to CF(0) by a central stalk formed by the gamma and epsilon chains, while a peripheral stalk is formed by the delta and b chains.

It localises to the cell membrane. It catalyses the reaction ATP + H2O + 4 H(+)(in) = ADP + phosphate + 5 H(+)(out). In terms of biological role, produces ATP from ADP in the presence of a proton gradient across the membrane. The alpha chain is a regulatory subunit. In Desulforamulus reducens (strain ATCC BAA-1160 / DSM 100696 / MI-1) (Desulfotomaculum reducens), this protein is ATP synthase subunit alpha.